An 801-amino-acid polypeptide reads, in one-letter code: Mediator of RNA polymerase II transcription subunit 25 (801 aa).

3 stretches are compositionally biased toward low complexity: residues Pro647 to Ala676, Pro687 to Leu710, and Pro722 to Pro735. The segment at Pro647–Pro735 is disordered. The LXXLL motif motif lies at Leu689 to Leu693.

The protein belongs to the Mediator complex subunit 25 family. As to quaternary structure, component of the Mediator complex.

The protein resides in the nucleus. In terms of biological role, component of the Mediator complex, a coactivator involved in the regulated transcription of nearly all RNA polymerase II-dependent genes. Mediator functions as a bridge to convey information from gene-specific regulatory proteins to the basal RNA polymerase II transcription machinery. Mediator is recruited to promoters by direct interactions with regulatory proteins and serves as a scaffold for the assembly of a functional preinitiation complex with RNA polymerase II and the general transcription factors. This chain is Mediator of RNA polymerase II transcription subunit 25 (med25), found in Xenopus laevis (African clawed frog).